We begin with the raw amino-acid sequence, 437 residues long: UDP-glucuronate 4-epimerase 4 (437 aa).

The chain crosses the membrane as a helical span at residues 30-50; the sequence is SLTKFAFFSFFLLCLISLLFL. Positions 56–76 are disordered; sequence INPSSPSDPSRRSLRTNTYGG. A helical membrane pass occupies residues 96–116; the sequence is GITVLVTGAAGFVGTHVSAAL. 98 to 129 serves as a coordination point for NAD(+); the sequence is TVLVTGAAGFVGTHVSAALKRRGDGVIGLDNF. The Proton acceptor role is filled by Tyr-248.

This sequence belongs to the NAD(P)-dependent epimerase/dehydratase family. As to quaternary structure, homodimer. In terms of tissue distribution, in roots, leaves, siliques, flowers, pollen and stems.

The protein resides in the golgi apparatus. Its subcellular location is the golgi stack membrane. The enzyme catalyses UDP-alpha-D-glucuronate = UDP-alpha-D-galacturonate. Its activity is regulated as follows. Activated by glycerol, not effected by dimethyl sulfoxide and inhibited by high concentration of monovalent salts, UDP-xylose, UDP-arabinose or UDP. Functionally, involved in the synthesis of the negatively charged monosaccharide that forms the backbone of pectic cell wall components. This Arabidopsis thaliana (Mouse-ear cress) protein is UDP-glucuronate 4-epimerase 4 (GAE4).